Here is a 212-residue protein sequence, read N- to C-terminus: Imidazole glycerol phosphate synthase subunit HisH (212 aa).

The Glutamine amidotransferase type-1 domain maps to 3–212 (DVAIIDYGMG…MLANFISWAP (210 aa)). The active-site Nucleophile is the cysteine 82. Catalysis depends on residues histidine 192 and glutamate 194.

In terms of assembly, heterodimer of HisH and HisF.

It localises to the cytoplasm. The catalysed reaction is 5-[(5-phospho-1-deoxy-D-ribulos-1-ylimino)methylamino]-1-(5-phospho-beta-D-ribosyl)imidazole-4-carboxamide + L-glutamine = D-erythro-1-(imidazol-4-yl)glycerol 3-phosphate + 5-amino-1-(5-phospho-beta-D-ribosyl)imidazole-4-carboxamide + L-glutamate + H(+). The enzyme catalyses L-glutamine + H2O = L-glutamate + NH4(+). It participates in amino-acid biosynthesis; L-histidine biosynthesis; L-histidine from 5-phospho-alpha-D-ribose 1-diphosphate: step 5/9. Its function is as follows. IGPS catalyzes the conversion of PRFAR and glutamine to IGP, AICAR and glutamate. The HisH subunit catalyzes the hydrolysis of glutamine to glutamate and ammonia as part of the synthesis of IGP and AICAR. The resulting ammonia molecule is channeled to the active site of HisF. This Aromatoleum aromaticum (strain DSM 19018 / LMG 30748 / EbN1) (Azoarcus sp. (strain EbN1)) protein is Imidazole glycerol phosphate synthase subunit HisH.